Here is a 383-residue protein sequence, read N- to C-terminus: Succinyl-diaminopimelate desuccinylase (383 aa).

His-73 is a binding site for Zn(2+). Asp-75 is an active-site residue. Residue Asp-107 coordinates Zn(2+). The active-site Proton acceptor is Glu-141. 3 residues coordinate Zn(2+): Glu-142, Glu-170, and His-356.

This sequence belongs to the peptidase M20A family. DapE subfamily. In terms of assembly, homodimer. The cofactor is Zn(2+). Co(2+) serves as cofactor.

The catalysed reaction is N-succinyl-(2S,6S)-2,6-diaminopimelate + H2O = (2S,6S)-2,6-diaminopimelate + succinate. It participates in amino-acid biosynthesis; L-lysine biosynthesis via DAP pathway; LL-2,6-diaminopimelate from (S)-tetrahydrodipicolinate (succinylase route): step 3/3. Its function is as follows. Catalyzes the hydrolysis of N-succinyl-L,L-diaminopimelic acid (SDAP), forming succinate and LL-2,6-diaminopimelate (DAP), an intermediate involved in the bacterial biosynthesis of lysine and meso-diaminopimelic acid, an essential component of bacterial cell walls. This Pseudomonas entomophila (strain L48) protein is Succinyl-diaminopimelate desuccinylase.